The primary structure comprises 187 residues: uncharacterized protein (187 aa).

The protein belongs to the isochorismatase family.

This is an uncharacterized protein from Bacillus subtilis (strain 168).